Consider the following 341-residue polypeptide: UDP-glucose 4-epimerase (341 aa).

It belongs to the polysaccharide synthase family.

It catalyses the reaction UDP-alpha-D-glucose = UDP-alpha-D-galactose. Functionally, epimerizes UDP-galactose to UDP-glucose. May contribute to formation of LPS or the exopolysaccharide slime layer by providing UDP-galactose as a substrate for either molecule. The chain is UDP-glucose 4-epimerase (capD) from Rickettsia prowazekii (strain Madrid E).